Consider the following 432-residue polypeptide: Glutamate-1-semialdehyde 2,1-aminomutase (432 aa).

Lys-271 bears the N6-(pyridoxal phosphate)lysine mark.

It belongs to the class-III pyridoxal-phosphate-dependent aminotransferase family. HemL subfamily. In terms of assembly, homodimer. It depends on pyridoxal 5'-phosphate as a cofactor.

Its subcellular location is the cytoplasm. The enzyme catalyses (S)-4-amino-5-oxopentanoate = 5-aminolevulinate. It functions in the pathway porphyrin-containing compound metabolism; protoporphyrin-IX biosynthesis; 5-aminolevulinate from L-glutamyl-tRNA(Glu): step 2/2. The protein operates within porphyrin-containing compound metabolism; chlorophyll biosynthesis. The chain is Glutamate-1-semialdehyde 2,1-aminomutase from Prochlorococcus marinus (strain NATL2A).